A 569-amino-acid chain; its full sequence is uncharacterized protein (569 aa).

The first 21 residues, 1–21 (MLCVMMLLFSAIASFPVSAQA), serve as a signal peptide directing secretion. At 22-530 (KDQDAGILII…DHHRQTPLEK (509 aa)) the chain is on the extracellular side. The chain crosses the membrane as a helical span at residues 531–551 (ALWILSAVVLLFVIMFVSYTF). The Cytoplasmic segment spans residues 552 to 569 (YLRATLKKRIFKERRSLG).

It is found in the cell membrane. This is an uncharacterized protein from Bacillus subtilis (strain 168).